Consider the following 185-residue polypeptide: Ribosome-recycling factor (185 aa).

This sequence belongs to the RRF family.

It is found in the cytoplasm. Responsible for the release of ribosomes from messenger RNA at the termination of protein biosynthesis. May increase the efficiency of translation by recycling ribosomes from one round of translation to another. In Corynebacterium urealyticum (strain ATCC 43042 / DSM 7109), this protein is Ribosome-recycling factor.